Consider the following 573-residue polypeptide: Isocitrate dehydrogenase kinase/phosphatase (573 aa).

ATP contacts are provided by residues 317–323 (APGVRGM) and K338. D373 is an active-site residue.

This sequence belongs to the AceK family.

It localises to the cytoplasm. It catalyses the reaction L-seryl-[isocitrate dehydrogenase] + ATP = O-phospho-L-seryl-[isocitrate dehydrogenase] + ADP + H(+). Bifunctional enzyme which can phosphorylate or dephosphorylate isocitrate dehydrogenase (IDH) on a specific serine residue. This is a regulatory mechanism which enables bacteria to bypass the Krebs cycle via the glyoxylate shunt in response to the source of carbon. When bacteria are grown on glucose, IDH is fully active and unphosphorylated, but when grown on acetate or ethanol, the activity of IDH declines drastically concomitant with its phosphorylation. The protein is Isocitrate dehydrogenase kinase/phosphatase of Pseudomonas fluorescens (strain ATCC BAA-477 / NRRL B-23932 / Pf-5).